Reading from the N-terminus, the 305-residue chain is Ornithine carbamoyltransferase (305 aa).

Carbamoyl phosphate contacts are provided by residues 52 to 55 (STRT), Gln79, Arg103, and 130 to 133 (HPLQ). L-ornithine contacts are provided by residues Asn162, Asp224, and 228 to 229 (SM). Carbamoyl phosphate is bound by residues 264–265 (CL) and Arg292.

The protein belongs to the aspartate/ornithine carbamoyltransferase superfamily. OTCase family.

The protein resides in the cytoplasm. The enzyme catalyses carbamoyl phosphate + L-ornithine = L-citrulline + phosphate + H(+). It functions in the pathway amino-acid biosynthesis; L-arginine biosynthesis; L-arginine from L-ornithine and carbamoyl phosphate: step 1/3. Reversibly catalyzes the transfer of the carbamoyl group from carbamoyl phosphate (CP) to the N(epsilon) atom of ornithine (ORN) to produce L-citrulline. The sequence is that of Ornithine carbamoyltransferase from Pyrobaculum islandicum (strain DSM 4184 / JCM 9189 / GEO3).